Consider the following 264-residue polypeptide: Low molecular mass lipoprotein PBMHPC-23 (264 aa).

The first 23 residues, 1–23, serve as a signal peptide directing secretion; sequence MKFLVVFAVVRACVTPACAEMSA.

It belongs to the 30 kDa lipoprotein family.

It localises to the secreted. This chain is Low molecular mass lipoprotein PBMHPC-23, found in Bombyx mori (Silk moth).